Reading from the N-terminus, the 392-residue chain is 2-oxoisovalerate dehydrogenase subunit beta, mitochondrial (392 aa).

A mitochondrion-targeting transit peptide spans 1–50; that stretch reads MAVVAAAAGWLLRLRAAGAEGHWRRLPGAGLARGFLHPAATVEDAAQRRQ. Y152 is a binding site for thiamine diphosphate. Positions 178, 180, 181, 228, and 231 each coordinate K(+). K232 carries the N6-acetyllysine modification. Position 233 (N233) interacts with K(+). K241 carries the post-translational modification N6-acetyllysine.

Heterotetramer of 2 alpha/BCKDHA and 2 beta chains/BCKDHB that forms the branched-chain alpha-keto acid decarboxylase (E1) component of the BCKD complex. The branched-chain alpha-ketoacid dehydrogenase is a large complex composed of three major building blocks E1, E2 and E3. It is organized around E2, a 24-meric cubic core composed of DBT, to which are associated 6 to 12 copies of E1, and approximately 6 copies of the dehydrogenase E3, a DLD dimer. It depends on thiamine diphosphate as a cofactor.

Its subcellular location is the mitochondrion matrix. The enzyme catalyses N(6)-[(R)-lipoyl]-L-lysyl-[protein] + 3-methyl-2-oxobutanoate + H(+) = N(6)-[(R)-S(8)-2-methylpropanoyldihydrolipoyl]-L-lysyl-[protein] + CO2. Its function is as follows. Together with BCKDHA forms the heterotetrameric E1 subunit of the mitochondrial branched-chain alpha-ketoacid dehydrogenase (BCKD) complex. The BCKD complex catalyzes the multi-step oxidative decarboxylation of alpha-ketoacids derived from the branched-chain amino-acids valine, leucine and isoleucine producing CO2 and acyl-CoA which is subsequently utilized to produce energy. The E1 subunit catalyzes the first step with the decarboxylation of the alpha-ketoacid forming an enzyme-product intermediate. A reductive acylation mediated by the lipoylamide cofactor of E2 extracts the acyl group from the E1 active site for the next step of the reaction. The sequence is that of 2-oxoisovalerate dehydrogenase subunit beta, mitochondrial from Homo sapiens (Human).